A 387-amino-acid polypeptide reads, in one-letter code: 3-ketoacyl-CoA thiolase (387 aa).

C91 (acyl-thioester intermediate) is an active-site residue. Active-site proton acceptor residues include H343 and C373.

Belongs to the thiolase-like superfamily. Thiolase family. Heterotetramer of two alpha chains (FadB) and two beta chains (FadA).

The protein localises to the cytoplasm. It catalyses the reaction an acyl-CoA + acetyl-CoA = a 3-oxoacyl-CoA + CoA. The protein operates within lipid metabolism; fatty acid beta-oxidation. In terms of biological role, catalyzes the final step of fatty acid oxidation in which acetyl-CoA is released and the CoA ester of a fatty acid two carbons shorter is formed. The sequence is that of 3-ketoacyl-CoA thiolase from Shewanella sp. (strain ANA-3).